The sequence spans 160 residues: Fluoride-specific ion channel FluC (160 aa).

The next 4 helical transmembrane spans lie at 5–25 (LFISYGAILGASLRWAIGLLF), 34–54 (FGTLIANLFGCLIIGVLLGLF), 67–87 (FLITGFLGSLTTFSSFSSEVV), and 99–119 (FCVLMMHLFGCLAMTVLGIWI). Na(+) is bound by residues G74 and T77.

It belongs to the fluoride channel Fluc/FEX (TC 1.A.43) family.

The protein resides in the cell inner membrane. It catalyses the reaction fluoride(in) = fluoride(out). Its activity is regulated as follows. Na(+) is not transported, but it plays an essential structural role and its presence is essential for fluoride channel function. In terms of biological role, fluoride-specific ion channel. Important for reducing fluoride concentration in the cell, thus reducing its toxicity. The chain is Fluoride-specific ion channel FluC from Haemophilus influenzae (strain ATCC 51907 / DSM 11121 / KW20 / Rd).